The sequence spans 655 residues: Ribonuclease 3 (655 aa).

Disordered stretches follow at residues 1-148 (MENL…NSEK) and 171-376 (LIAP…NIPL). The interval 1–400 (MENLEKNTKK…NYIKDNYPVI (400 aa)) is unknown. A compositionally biased stretch (basic residues) spans 8–20 (TKKKIKKPNNFKK). 2 stretches are compositionally biased toward basic and acidic residues: residues 21–34 (NNKD…DKPT) and 69–89 (DYEK…RSDE). Positions 92–102 (NNNSKKQNNNK) are enriched in low complexity. A compositionally biased stretch (basic residues) spans 103–115 (QAKKKANKNKKQK). Over residues 135 to 148 (AANNQVKAIPNSEK) the composition is skewed to polar residues. Residues 206-223 (NNFVNNQKNHNKNNAGNK) are compositionally biased toward low complexity. 2 stretches are compositionally biased toward polar residues: residues 229–242 (PTKP…SKST) and 250–259 (PNFTSNQPKP). Composition is skewed to basic and acidic residues over residues 260–274 (TQKE…KKAE) and 298–309 (DQTKKKQPKENK). A compositionally biased stretch (low complexity) spans 310-332 (NQQIKAVNLNNNQQKTNNNNQKN). Residues 333–350 (SVDKSENDNNKKKSEANQ) show a composition bias toward basic and acidic residues. Residues 351-360 (KQENLNPNNN) show a composition bias toward low complexity. Positions 401-655 (YADLKEKNRL…KFRGLLKLEK (255 aa)) are RNase 3. Residues 432 to 556 (LELLLKKFKV…FIGAMYLDQG (125 aa)) enclose the RNase III domain. Glu-472 provides a ligand contact to Mg(2+). The active site involves Asp-476. The Mg(2+) site is built by Asp-542 and Glu-545. Glu-545 is a catalytic residue. The DRBM domain maps to 582–649 (DYKSIFQEII…AKEAISKFRG (68 aa)).

Belongs to the ribonuclease III family. Homodimer. Requires Mg(2+) as cofactor.

Its subcellular location is the cytoplasm. It carries out the reaction Endonucleolytic cleavage to 5'-phosphomonoester.. Its function is as follows. Digests double-stranded RNA. Involved in the processing of primary rRNA transcript to yield the immediate precursors to the large and small rRNAs (23S and 16S). Processes some mRNAs, and tRNAs when they are encoded in the rRNA operon. Processes pre-crRNA and tracrRNA of type II CRISPR loci if present in the organism. The polypeptide is Ribonuclease 3 (rnc) (Mycoplasmoides gallisepticum (strain R(low / passage 15 / clone 2)) (Mycoplasma gallisepticum)).